Consider the following 89-residue polypeptide: Protein S100-A6 (89 aa).

EF-hand domains lie at 12-47 (LVAI…IGSK) and 48-83 (LQDA…LALI). Ca(2+)-binding residues include threonine 28 and glutamate 33. Lysine 40 carries the N6-acetyllysine modification. Serine 46 carries the post-translational modification Phosphoserine. Lysine 47 is subject to N6-acetyllysine; alternate. Lysine 47 is modified (N6-succinyllysine; alternate). Residues aspartate 61, asparagine 63, aspartate 65, glutamate 67, and glutamate 72 each contribute to the Ca(2+) site.

Belongs to the S-100 family. Homodimer; head to tail assembly of 2 subunits. Interacts with CACYBP in a calcium-dependent manner. Interacts with ANXA2 and ANXA11 (via N-terminus). Interacts with SUGT1. Interacts with TP53; has higher affinity for TP53 that is phosphorylated on its N-terminal domain, and lower affinity for TP53 that is phosphorylated on its C-terminal domain. Interacts with tropomyosin. Interacts with FKBP4. Interacts with PPP5C (via TPR repeats); the interaction is calcium-dependent and modulates PPP5C activity. Interacts with TPPP; this interaction inhibits TPPP dimerization.

The protein localises to the nucleus envelope. It is found in the cytoplasm. Its subcellular location is the cell membrane. Functionally, may function as calcium sensor and modulator, contributing to cellular calcium signaling. May function by interacting with other proteins, such as TPR-containing proteins, and indirectly play a role in many physiological processes such as the reorganization of the actin cytoskeleton and in cell motility. Binds 2 calcium ions. Calcium binding is cooperative. The sequence is that of Protein S100-A6 (S100a6) from Mus musculus (Mouse).